Reading from the N-terminus, the 267-residue chain is MSGERRLNGLSLKVGPLGEHDRLLTLLSDQEGVTRLAVPGARRPRSSLAAAVPLSLLELQVAGRRGLARVRQLKVLRSFNSVGKQLETLAAAQALAELSLMLVAGNDPLPGLLNTLLMHLERLEALSQAQPAQPNTTLACSVQACVHLLALGGYGLPVQECCRNGTALEPPLGQWEWRCSLMPEEGFAIGALPGAALQLNPSELALLQRLLRPALPMRRDGELMGPPEVWLRLLAVVECWIRTHLPHHMRALGMLREAIISSGDGRT.

Belongs to the RecO family.

Involved in DNA repair and RecF pathway recombination. The polypeptide is DNA repair protein RecO (Prochlorococcus marinus (strain MIT 9303)).